Consider the following 176-residue polypeptide: NAD(P)H-quinone oxidoreductase subunit 6, chloroplastic (176 aa).

The next 5 helical transmembrane spans lie at 10-30 (FLLVFLGSGLLVGGLGVVLLP), 32-52 (PIFSAFSLGFVLVCISLLYIL), 61-81 (AQLLIYVGAINVLIIFAVMFM), 92-112 (LWTVGDGITSLVCTTILFSLI), and 152-172 (FFLPFELISIILLVALVGAIS).

This sequence belongs to the complex I subunit 6 family. As to quaternary structure, NDH is composed of at least 16 different subunits, 5 of which are encoded in the nucleus.

Its subcellular location is the plastid. The protein localises to the chloroplast thylakoid membrane. It carries out the reaction a plastoquinone + NADH + (n+1) H(+)(in) = a plastoquinol + NAD(+) + n H(+)(out). The enzyme catalyses a plastoquinone + NADPH + (n+1) H(+)(in) = a plastoquinol + NADP(+) + n H(+)(out). NDH shuttles electrons from NAD(P)H:plastoquinone, via FMN and iron-sulfur (Fe-S) centers, to quinones in the photosynthetic chain and possibly in a chloroplast respiratory chain. The immediate electron acceptor for the enzyme in this species is believed to be plastoquinone. Couples the redox reaction to proton translocation, and thus conserves the redox energy in a proton gradient. The chain is NAD(P)H-quinone oxidoreductase subunit 6, chloroplastic (ndhG) from Lobularia maritima (Sweet alyssum).